Reading from the N-terminus, the 765-residue chain is Protein transport protein Sec23A (765 aa).

Position 2 is an N-acetylthreonine (threonine 2). Zn(2+) contacts are provided by cysteine 61, cysteine 66, cysteine 85, and cysteine 88. The residue at position 308 (threonine 308) is a Phosphothreonine. A Gelsolin-like repeat occupies 632 to 718 (PEPVLLDSSS…EHGGSQARFL (87 aa)).

It belongs to the SEC23/SEC24 family. SEC23 subfamily. As to quaternary structure, COPII is composed of at least five proteins: the Sec23/24 complex, the Sec13/31 complex and Sar1. Interacts with SEC23IP. Interacts with HTR4. Interacts with SEC16A. Interacts with SLC6A4. Interacts (as part of the Sec23/24 complex) with SEC22B; recruits SEC22B into COPII-coated vesicles and allows the transport of this cargo from the endoplasmic reticulum to the Golgi. Interacts (via Gelsolin-like repeat) with MIA2 and MIA3; specifically involved in the transport of large cargos like the collagen COL7A1. Interacts with DDHD1. Interacts with TMEM39A. Interacts with SACM1L; this interaction is reduced in the absence of TMEM39A. Interacts with kinase FAM20C; transport of FAM20C from the endoplasmic reticulum to the Golgi is likely to be mediated by COPII vesicles. As to expression, high levels in brain and fibroblasts.

Its subcellular location is the cytoplasmic vesicle. The protein resides in the COPII-coated vesicle membrane. It localises to the endoplasmic reticulum membrane. The protein localises to the cytoplasm. It is found in the cytosol. Its function is as follows. Component of the coat protein complex II (COPII) which promotes the formation of transport vesicles from the endoplasmic reticulum (ER). The coat has two main functions, the physical deformation of the endoplasmic reticulum membrane into vesicles and the selection of cargo molecules for their transport to the Golgi complex. Required for the translocation of insulin-induced glucose transporter SLC2A4/GLUT4 to the cell membrane. This Mus musculus (Mouse) protein is Protein transport protein Sec23A.